The sequence spans 218 residues: Adenylate kinase (218 aa).

Residue 10 to 15 (GAGKGT) participates in ATP binding. An NMP region spans residues 30–59 (STGDMLRAAIAKGTPLGLSAQKIMESGGLV). AMP contacts are provided by residues Thr-31, Arg-36, 57 to 59 (GLV), 85 to 88 (GFPR), and Gln-92. Residues 122-159 (GRRIHQPSGRVYHVVNQPPKNPGVDDITGEPLIQRDDD) are LID. ATP-binding positions include Arg-123 and 132-133 (VY). 2 residues coordinate AMP: Arg-156 and Arg-167. Gly-203 is an ATP binding site.

This sequence belongs to the adenylate kinase family. Monomer.

Its subcellular location is the cytoplasm. It carries out the reaction AMP + ATP = 2 ADP. It functions in the pathway purine metabolism; AMP biosynthesis via salvage pathway; AMP from ADP: step 1/1. Catalyzes the reversible transfer of the terminal phosphate group between ATP and AMP. Plays an important role in cellular energy homeostasis and in adenine nucleotide metabolism. The chain is Adenylate kinase from Legionella pneumophila (strain Corby).